We begin with the raw amino-acid sequence, 514 residues long: MDFSSFVASQLNAGTIWPEGIIIITLMVILIGDLIVGRSSKTWLPYVAIAGLLAAVVALYFEWDNPNTLSFLGAFNGDNLSIVFRAIVALSTTVTILMSVRYVEQSGTSLAEFIAIMLTATLGGMFLSGANELVMIFISLEMLSISSYLMTGYMKRDSRSNEAALKYLLIGASSSAIFLYGVSLLYGLSGGETTLDAIAAKITNVNGGQSLGLAIALVFVIAGIAFKISAVPFHQWTPDVYEGSPTPVVAFLSVGSKAAGFALAIRLLVTAFALVSEQWHFIFTALAILSMVLGNVVALAQTSMKRMLAYSSIGQAGFVMIGLTANSDAGYSSMIFYLLIYLFMNLGAFICIILFALRTGTDQISEYSGLYQKDPLLTLGLSICLLSLGGIPPLAGFFGKIYLFWAGWQSGLYGLVLLGLVTSVISIYYYIRVVKMMVVKEPQDMSESVKNYPEIRWNLPGMRPLQVGLVLSVIATSLAGILSNPLFNLATDSVTSTPILQSAVISTQISQADK.

14 consecutive transmembrane segments (helical) span residues 16-36, 43-63, 80-100, 110-130, 133-153, 168-188, 211-231, 245-265, 279-299, 307-327, 335-355, 379-399, 411-431, and 467-487; these read IWPE…DLIV, WLPY…YFEW, LSIV…LMSV, LAEF…LSGA, LVMI…MTGY, LLIG…LYGL, LGLA…ISAV, PTPV…ALAI, WHFI…VVAL, MLAY…TANS, IFYL…IILF, LGLS…GFFG, GLYG…YYYI, and VGLV…NPLF.

It belongs to the complex I subunit 2 family. NDH-1 can be composed of about 15 different subunits; different subcomplexes with different compositions have been identified which probably have different functions.

It is found in the cellular thylakoid membrane. It carries out the reaction a plastoquinone + NADH + (n+1) H(+)(in) = a plastoquinol + NAD(+) + n H(+)(out). The catalysed reaction is a plastoquinone + NADPH + (n+1) H(+)(in) = a plastoquinol + NADP(+) + n H(+)(out). In terms of biological role, NDH-1 shuttles electrons from an unknown electron donor, via FMN and iron-sulfur (Fe-S) centers, to quinones in the respiratory and/or the photosynthetic chain. The immediate electron acceptor for the enzyme in this species is believed to be plastoquinone. Couples the redox reaction to proton translocation, and thus conserves the redox energy in a proton gradient. Cyanobacterial NDH-1 also plays a role in inorganic carbon-concentration. The chain is NAD(P)H-quinone oxidoreductase subunit 2 from Gloeothece citriformis (strain PCC 7424) (Cyanothece sp. (strain PCC 7424)).